The sequence spans 356 residues: Phosphate acyltransferase (356 aa).

Belongs to the PlsX family. As to quaternary structure, homodimer. Probably interacts with PlsY.

Its subcellular location is the cytoplasm. It carries out the reaction a fatty acyl-[ACP] + phosphate = an acyl phosphate + holo-[ACP]. Its pathway is lipid metabolism; phospholipid metabolism. Its function is as follows. Catalyzes the reversible formation of acyl-phosphate (acyl-PO(4)) from acyl-[acyl-carrier-protein] (acyl-ACP). This enzyme utilizes acyl-ACP as fatty acyl donor, but not acyl-CoA. The polypeptide is Phosphate acyltransferase (Shigella flexneri serotype 5b (strain 8401)).